Reading from the N-terminus, the 392-residue chain is Tryptophan synthase beta chain 1 (392 aa).

Residue lysine 85 is modified to N6-(pyridoxal phosphate)lysine.

Belongs to the TrpB family. As to quaternary structure, tetramer of two alpha and two beta chains. Requires pyridoxal 5'-phosphate as cofactor.

It catalyses the reaction (1S,2R)-1-C-(indol-3-yl)glycerol 3-phosphate + L-serine = D-glyceraldehyde 3-phosphate + L-tryptophan + H2O. Its pathway is amino-acid biosynthesis; L-tryptophan biosynthesis; L-tryptophan from chorismate: step 5/5. The beta subunit is responsible for the synthesis of L-tryptophan from indole and L-serine. This is Tryptophan synthase beta chain 1 (trpB1) from Methanothermobacter thermautotrophicus (strain ATCC 29096 / DSM 1053 / JCM 10044 / NBRC 100330 / Delta H) (Methanobacterium thermoautotrophicum).